Here is a 350-residue protein sequence, read N- to C-terminus: UDP-3-O-acylglucosamine N-acyltransferase (350 aa).

The Proton acceptor role is filled by His-248.

Belongs to the transferase hexapeptide repeat family. LpxD subfamily. Homotrimer.

The catalysed reaction is a UDP-3-O-[(3R)-3-hydroxyacyl]-alpha-D-glucosamine + a (3R)-hydroxyacyl-[ACP] = a UDP-2-N,3-O-bis[(3R)-3-hydroxyacyl]-alpha-D-glucosamine + holo-[ACP] + H(+). Its pathway is bacterial outer membrane biogenesis; LPS lipid A biosynthesis. Its function is as follows. Catalyzes the N-acylation of UDP-3-O-acylglucosamine using 3-hydroxyacyl-ACP as the acyl donor. Is involved in the biosynthesis of lipid A, a phosphorylated glycolipid that anchors the lipopolysaccharide to the outer membrane of the cell. This is UDP-3-O-acylglucosamine N-acyltransferase from Nostoc punctiforme (strain ATCC 29133 / PCC 73102).